The following is a 201-amino-acid chain: Small ribosomal subunit protein uS4 (201 aa).

The 61-residue stretch at 91–151 folds into the S4 RNA-binding domain; that stretch reads SRLDNVVYRA…DKSINTLPFE (61 aa).

The protein belongs to the universal ribosomal protein uS4 family. In terms of assembly, part of the 30S ribosomal subunit. Contacts protein S5. The interaction surface between S4 and S5 is involved in control of translational fidelity.

Its function is as follows. One of the primary rRNA binding proteins, it binds directly to 16S rRNA where it nucleates assembly of the body of the 30S subunit. With S5 and S12 plays an important role in translational accuracy. The sequence is that of Small ribosomal subunit protein uS4 from Mycolicibacterium gilvum (strain PYR-GCK) (Mycobacterium gilvum (strain PYR-GCK)).